Here is a 140-residue protein sequence, read N- to C-terminus: MDNKMRLEFLAKSENEGFARVSVSAFIAQLDPTIEELTDIKTAVSEAVTNAIIHGYECDESKVVIIEASICEDEISITVEDNGIGIENLEEAREPLYTSKPELERSGMGFTVMETFMDSLEVYSEKDKGTKIIMKKKMNT.

It belongs to the anti-sigma-factor family.

It carries out the reaction L-seryl-[protein] + ATP = O-phospho-L-seryl-[protein] + ADP + H(+). The enzyme catalyses L-threonyl-[protein] + ATP = O-phospho-L-threonyl-[protein] + ADP + H(+). Binds to sigma F and blocks its ability to form an RNA polymerase holoenzyme (E-sigma F). Phosphorylates SpoIIAA on a serine residue. This phosphorylation may enable SpoIIAA to act as an anti-anti-sigma factor that counteracts SpoIIAB and thus releases sigma F from inhibition. The polypeptide is Anti-sigma F factor (Clostridium perfringens (strain ATCC 13124 / DSM 756 / JCM 1290 / NCIMB 6125 / NCTC 8237 / Type A)).